The following is a 1035-amino-acid chain: Integrin alpha-9 (1035 aa).

Residues 1–29 form the signal peptide; the sequence is MGGPAAPRGAGRLRALLLALVVAGIPAGA. Topologically, residues 30–981 are extracellular; sequence YNLDPQRPVH…LEPRGYVVGW (952 aa). 7 FG-GAP repeats span residues 35 to 96, 111 to 174, 182 to 232, 233 to 289, 290 to 349, 351 to 408, and 411 to 474; these read QRPV…PDRR, SCGK…AKGR, EYKK…NTYL, KLND…SGTL, IKIF…GALE, QLAL…GIVP, and SMKL…LPGS. Intrachain disulfides connect cysteine 87-cysteine 97, cysteine 142-cysteine 162, and cysteine 179-cysteine 194. Residue asparagine 225 is glycosylated (N-linked (GlcNAc...) asparagine). Ca(2+)-binding residues include aspartate 312, asparagine 314, aspartate 316, aspartate 320, aspartate 373, aspartate 375, aspartate 377, aspartate 381, aspartate 435, aspartate 437, asparagine 439, and aspartate 443. Residue asparagine 476 is glycosylated (N-linked (GlcNAc...) asparagine). A disulfide bridge connects residues cysteine 482 and cysteine 491. Asparagine 493 carries N-linked (GlcNAc...) asparagine glycosylation. The cysteines at positions 497 and 555 are disulfide-linked. N-linked (GlcNAc...) asparagine glycosylation is present at asparagine 612. Cysteine 620 and cysteine 625 form a disulfide bridge. Residues asparagine 654, asparagine 658, asparagine 672, and asparagine 676 are each glycosylated (N-linked (GlcNAc...) asparagine). Cysteine 696 and cysteine 706 are disulfide-bonded. Residues asparagine 807 and asparagine 854 are each glycosylated (N-linked (GlcNAc...) asparagine). 2 disulfide bridges follow: cysteine 855/cysteine 891 and cysteine 898/cysteine 903. N-linked (GlcNAc...) asparagine glycosylation is present at asparagine 904. Residues 982 to 1002 form a helical membrane-spanning segment; sequence IIAISLLVGILIFLLLAVLLW. Residues 1003–1035 are Cytoplasmic-facing; that stretch reads KMGFFRRRYKEIIEAEKNRKENEDSWDWVQKNQ. A GFFKR motif motif is present at residues 1005-1009; that stretch reads GFFRR.

This sequence belongs to the integrin alpha chain family. Heterodimer of an alpha and a beta subunit. Alpha-9 (ITGA9) associates with beta-1 (ITGB1). Integrin ITGA9:ITGB1 interacts with FBLN5 (via N-terminus). Integrin ITGA9:ITGB1 interacts with SPP1/OPN (via N-terminus). Integrin ITGA9:ITGB1 interacts with TNC/TNFN3 (via the 3rd Fibronectin type-III domain). Integrin ITGA9:ITGB1 interacts with SVEP1/polydom (via Sushi domain 21); thereby inhibits Ca(2+) intracellular signaling and as a result represses vasocontraction. Expressed in vascular smooth muscle cells (at protein level). Expressed in the airway epithelium (at protein level).

The protein localises to the membrane. Its function is as follows. Integrin alpha-9/beta-1 (ITGA9:ITGB1) is a receptor for VCAM1, cytotactin and osteopontin. It recognizes the sequence A-E-I-D-G-I-E-L in cytotactin. ITGA9:ITGB1 may play a crucial role in SVEP1/polydom-mediated myoblast cell adhesion. Integrin ITGA9:ITGB1 represses PRKCA-mediated L-type voltage-gated channel Ca(2+) influx and ROCK-mediated calcium sensitivity in vascular smooth muscle cells via its interaction with SVEP1, thereby inhibiting vasocontraction. The sequence is that of Integrin alpha-9 (ITGA9) from Homo sapiens (Human).